The sequence spans 150 residues: Cytochrome c-type biogenesis protein CcmE (150 aa).

Over 1–7 the chain is Cytoplasmic; that stretch reads MTRKQKR. A helical; Signal-anchor for type II membrane protein membrane pass occupies residues 8-28; the sequence is LAIIGGGVGFLTAAVLLVMFA. Residues 29–150 lie on the Periplasmic side of the membrane; it reads FSQAVAYFYV…VTLGGEENIR (122 aa). Positions 123 and 127 each coordinate heme.

This sequence belongs to the CcmE/CycJ family.

The protein resides in the cell inner membrane. Functionally, heme chaperone required for the biogenesis of c-type cytochromes. Transiently binds heme delivered by CcmC and transfers the heme to apo-cytochromes in a process facilitated by CcmF and CcmH. In Sinorhizobium medicae (strain WSM419) (Ensifer medicae), this protein is Cytochrome c-type biogenesis protein CcmE.